A 438-amino-acid polypeptide reads, in one-letter code: Xylose isomerase (438 aa).

Active-site residues include histidine 100 and aspartate 103. The Mg(2+) site is built by glutamate 231, glutamate 267, histidine 270, aspartate 295, aspartate 306, aspartate 308, and aspartate 338.

The protein belongs to the xylose isomerase family. As to quaternary structure, homotetramer. Mg(2+) is required as a cofactor.

The protein localises to the cytoplasm. The catalysed reaction is alpha-D-xylose = alpha-D-xylulofuranose. This is Xylose isomerase from Caldanaerobacter subterraneus subsp. yonseiensis (Thermoanaerobacter yonseiensis).